Consider the following 197-residue polypeptide: NADH-quinone oxidoreductase subunit C (197 aa).

It belongs to the complex I 30 kDa subunit family. NDH-1 is composed of 14 different subunits. Subunits NuoB, C, D, E, F, and G constitute the peripheral sector of the complex.

It is found in the cell inner membrane. It carries out the reaction a quinone + NADH + 5 H(+)(in) = a quinol + NAD(+) + 4 H(+)(out). Functionally, NDH-1 shuttles electrons from NADH, via FMN and iron-sulfur (Fe-S) centers, to quinones in the respiratory chain. The immediate electron acceptor for the enzyme in this species is believed to be ubiquinone. Couples the redox reaction to proton translocation (for every two electrons transferred, four hydrogen ions are translocated across the cytoplasmic membrane), and thus conserves the redox energy in a proton gradient. The sequence is that of NADH-quinone oxidoreductase subunit C from Neisseria meningitidis serogroup B (strain ATCC BAA-335 / MC58).